The sequence spans 352 residues: Probable protein phosphatase 2C 56 (352 aa).

Disordered stretches follow at residues 18–37 (RGRR…ASRG) and 53–87 (SSSS…ITGG). Low complexity-rich tracts occupy residues 23 to 37 (AASP…ASRG) and 53 to 75 (SSSS…ARTR). Residues 96 to 343 (SWDYSSFKGR…DNITCIVLQF (248 aa)) enclose the PPM-type phosphatase domain. 4 residues coordinate Mn(2+): D132, G133, D295, and D334.

Belongs to the PP2C family. Mg(2+) serves as cofactor. It depends on Mn(2+) as a cofactor.

The enzyme catalyses O-phospho-L-seryl-[protein] + H2O = L-seryl-[protein] + phosphate. It catalyses the reaction O-phospho-L-threonyl-[protein] + H2O = L-threonyl-[protein] + phosphate. This is Probable protein phosphatase 2C 56 from Oryza sativa subsp. japonica (Rice).